The sequence spans 482 residues: Ribosomal RNA small subunit methyltransferase F (482 aa).

S-adenosyl-L-methionine is bound by residues 119-125 (ASAPGSK), Glu143, Asp170, and Asp188. Residue Cys241 is the Nucleophile of the active site.

It belongs to the class I-like SAM-binding methyltransferase superfamily. RsmB/NOP family.

It is found in the cytoplasm. It carries out the reaction cytidine(1407) in 16S rRNA + S-adenosyl-L-methionine = 5-methylcytidine(1407) in 16S rRNA + S-adenosyl-L-homocysteine + H(+). Specifically methylates the cytosine at position 1407 (m5C1407) of 16S rRNA. In Shewanella sp. (strain ANA-3), this protein is Ribosomal RNA small subunit methyltransferase F.